Here is a 350-residue protein sequence, read N- to C-terminus: GTPase Obg (350 aa).

Positions 1–158 (MFIDSVKITL…RLVRLELKLI (158 aa)) constitute an Obg domain. One can recognise an OBG-type G domain in the interval 159–339 (ADVGLVGFPN…LKFMLLEEIK (181 aa)). GTP-binding positions include 165–172 (GFPNVGKS), 190–194 (FTTLT), 212–215 (DIPG), 280–283 (SKSD), and 320–322 (SSL). The Mg(2+) site is built by S172 and T192.

This sequence belongs to the TRAFAC class OBG-HflX-like GTPase superfamily. OBG GTPase family. As to quaternary structure, monomer. Mg(2+) serves as cofactor.

The protein resides in the cytoplasm. An essential GTPase which binds GTP, GDP and possibly (p)ppGpp with moderate affinity, with high nucleotide exchange rates and a fairly low GTP hydrolysis rate. Plays a role in control of the cell cycle, stress response, ribosome biogenesis and in those bacteria that undergo differentiation, in morphogenesis control. The sequence is that of GTPase Obg from Campylobacter jejuni (strain RM1221).